Here is a 213-residue protein sequence, read N- to C-terminus: Nucleoside triphosphate pyrophosphatase (213 aa).

Aspartate 77 serves as the catalytic Proton acceptor.

This sequence belongs to the Maf family. Requires a divalent metal cation as cofactor.

The protein localises to the cytoplasm. The catalysed reaction is a ribonucleoside 5'-triphosphate + H2O = a ribonucleoside 5'-phosphate + diphosphate + H(+). The enzyme catalyses a 2'-deoxyribonucleoside 5'-triphosphate + H2O = a 2'-deoxyribonucleoside 5'-phosphate + diphosphate + H(+). Nucleoside triphosphate pyrophosphatase. May have a dual role in cell division arrest and in preventing the incorporation of modified nucleotides into cellular nucleic acids. The sequence is that of Nucleoside triphosphate pyrophosphatase from Cutibacterium acnes (strain DSM 16379 / KPA171202) (Propionibacterium acnes).